We begin with the raw amino-acid sequence, 223 residues long: UPF0441 protein YgiB (223 aa).

Over residues 178 to 195 (TVPKTAMAPKPATTTTVT) the composition is skewed to low complexity. Residues 178 to 223 (TVPKTAMAPKPATTTTVTRGGFGESVAKQSTMQRSAAGTSTRSMGG) are disordered. Positions 204-223 (AKQSTMQRSAAGTSTRSMGG) are enriched in polar residues.

Belongs to the UPF0441 family.

The chain is UPF0441 protein YgiB from Salmonella enteritidis PT4 (strain P125109).